The chain runs to 615 residues: Sodium-dependent dopamine transporter (615 aa).

The interval 1-39 (MQLVPTDDPDEKIGRTSNGMQNATLPIDGPVNTEPKDPA) is disordered. Over 1–46 (MQLVPTDDPDEKIGRTSNGMQNATLPIDGPVNTEPKDPAREQWSGK) the chain is Cytoplasmic. The segment covering 15 to 24 (RTSNGMQNAT) has biased composition (polar residues). A helical transmembrane segment spans residues 47 to 72 (LDFLLSVVGFAVDLGNIWRFPYLCFK). The Na(+) site is built by Gly-55, Ala-57, Val-58, and Asn-62. The Extracellular portion of the chain corresponds to 73–76 (NGGG). The helical transmembrane segment at 77–100 (VFLIPYSIMVLLTGVPLFYMELCL) threads the bilayer. The Cytoplasmic segment spans residues 101-120 (GQYYRKGAITTWGRICPLFK). A helical transmembrane segment spans residues 121–151 (GIGYCVILTAFYVDFFYNVILAWGLHYLYTS). Residues 152-229 (FSFNLPWASC…IRSVTDLGNV (78 aa)) are Extracellular-facing. The cysteines at positions 161 and 170 are disulfide-linked. N-linked (GlcNAc...) asparagine glycosylation is found at Asn-162 and Asn-187. The chain crosses the membrane as a helical span at residues 230–250 (RWDIALSLFVVYLICYFSMWK). Over 251–253 (GIH) the chain is Cytoplasmic. A helical transmembrane segment spans residues 254–278 (TSGKVVWFTALFPYVVLGILFIRGV). At 279 to 302 (TLPGWQNGIEYYLRPNFEMLKRPS) the chain is on the extracellular side. A helical membrane pass occupies residues 303 to 328 (VWQDAATQVFFSLGPGFGVLMAYSSY). Ser-314 serves as a coordination point for Na(+). Over 329–334 (NDFHNN) the chain is Cytoplasmic. A helical transmembrane segment spans residues 335-358 (VYVDALFTSFINCATSFLSGFVIF). Na(+) is bound at residue Asn-346. The Extracellular segment spans residues 359 to 398 (SVLGYMSCKSGKPIEAVAQEGPGLVFVVYPEALSTMPYAP). Residues 399 to 424 (FWSVLFFLMLMTLGLDSSFGGSEAII) form a helical membrane-spanning segment. Na(+)-binding residues include Leu-411, Asp-414, and Ser-415. At 425–439 (TGLSDEFPILKKNRE) the chain is on the cytoplasmic side. A helical membrane pass occupies residues 440 to 460 (VFVGCLFAFYMVIGIAMCTEG). Gly-461 is a topological domain (extracellular). Residues 462 to 488 (ILIMEWLIIYGTTWGLLIAVFCEAMVI) form a helical membrane-spanning segment. Residues 489-518 (AYIYGLRQFVHDVKEMMGFRPGNYWKFCWS) lie on the Cytoplasmic side of the membrane. A helical transmembrane segment spans residues 519 to 541 (CAAPFILLSMITSNFINYQALTY). Over 542 to 544 (QDY) the chain is Extracellular. The helical transmembrane segment at 545–565 (TYPTAANVIGIIFALSGASFI) threads the bilayer. Residues 566 to 615 (PLVGIYKFVNARGNTISEKWQRVTMPYRKRPNQTEYIPIPTTQPHSDIML) lie on the Cytoplasmic side of the membrane.

Belongs to the sodium:neurotransmitter symporter (SNF) (TC 2.A.22) family.

It is found in the cell membrane. Dopamine transporter. Terminates the action of dopamine by its high affinity sodium-dependent reuptake into presynaptic terminals. Plays a role in the learned avoidance behavior of animals exposed to food that induces mitochondrial stress. The sequence is that of Sodium-dependent dopamine transporter from Caenorhabditis elegans.